We begin with the raw amino-acid sequence, 95 residues long: MLHTLSVSPWHADIAAMLRLMEHGDDLVLLSDGVTAAIADGRFLEILQSAPITLYVLQDDVDARGLAGQIADSVGRVSYTDFVRLTVKHAGQLAW.

Belongs to the DsrH/TusB family. In terms of assembly, heterohexamer, formed by a dimer of trimers. The hexameric TusBCD complex contains 2 copies each of TusB, TusC and TusD. The TusBCD complex interacts with TusE.

It localises to the cytoplasm. Part of a sulfur-relay system required for 2-thiolation of 5-methylaminomethyl-2-thiouridine (mnm(5)s(2)U) at tRNA wobble positions. This Klebsiella pneumoniae subsp. pneumoniae (strain ATCC 700721 / MGH 78578) protein is Protein TusB.